We begin with the raw amino-acid sequence, 379 residues long: Homoserine O-succinyltransferase (379 aa).

Positions 51 to 360 constitute an AB hydrolase-1 domain; it reads NAVLICHALS…DAPQGHDAFL (310 aa). S157 (nucleophile) is an active-site residue. R227 serves as a coordination point for substrate. Catalysis depends on residues D323 and H356. Residue D357 participates in substrate binding.

It belongs to the AB hydrolase superfamily. MetX family. As to quaternary structure, homodimer.

The protein localises to the cytoplasm. The catalysed reaction is L-homoserine + succinyl-CoA = O-succinyl-L-homoserine + CoA. The protein operates within amino-acid biosynthesis; L-methionine biosynthesis via de novo pathway; O-succinyl-L-homoserine from L-homoserine: step 1/1. Transfers a succinyl group from succinyl-CoA to L-homoserine, forming succinyl-L-homoserine. The polypeptide is Homoserine O-succinyltransferase (Ectopseudomonas mendocina (strain ymp) (Pseudomonas mendocina)).